A 268-amino-acid chain; its full sequence is Hydroxyethylthiazole kinase (268 aa).

Met-45 contributes to the substrate binding site. The ATP site is built by Arg-121 and Thr-167. A substrate-binding site is contributed by Gly-194.

The protein belongs to the Thz kinase family. Requires Mg(2+) as cofactor.

The catalysed reaction is 5-(2-hydroxyethyl)-4-methylthiazole + ATP = 4-methyl-5-(2-phosphooxyethyl)-thiazole + ADP + H(+). It functions in the pathway cofactor biosynthesis; thiamine diphosphate biosynthesis; 4-methyl-5-(2-phosphoethyl)-thiazole from 5-(2-hydroxyethyl)-4-methylthiazole: step 1/1. Its function is as follows. Catalyzes the phosphorylation of the hydroxyl group of 4-methyl-5-beta-hydroxyethylthiazole (THZ). This Bacillus cereus (strain ZK / E33L) protein is Hydroxyethylthiazole kinase.